The following is a 929-amino-acid chain: Isoleucine--tRNA ligase (929 aa).

The 'HIGH' region signature appears at 57-67 (PYANGNIHVGH). E554 contacts L-isoleucyl-5'-AMP. Positions 595–599 (KMSKS) match the 'KMSKS' region motif. K598 provides a ligand contact to ATP. Residues C888, C891, C908, and C911 each coordinate Zn(2+).

Belongs to the class-I aminoacyl-tRNA synthetase family. IleS type 1 subfamily. As to quaternary structure, monomer. Zn(2+) is required as a cofactor.

It localises to the cytoplasm. It catalyses the reaction tRNA(Ile) + L-isoleucine + ATP = L-isoleucyl-tRNA(Ile) + AMP + diphosphate. Functionally, catalyzes the attachment of isoleucine to tRNA(Ile). As IleRS can inadvertently accommodate and process structurally similar amino acids such as valine, to avoid such errors it has two additional distinct tRNA(Ile)-dependent editing activities. One activity is designated as 'pretransfer' editing and involves the hydrolysis of activated Val-AMP. The other activity is designated 'posttransfer' editing and involves deacylation of mischarged Val-tRNA(Ile). The sequence is that of Isoleucine--tRNA ligase from Streptococcus thermophilus (strain CNRZ 1066).